We begin with the raw amino-acid sequence, 1093 residues long: Phosphorylase b kinase regulatory subunit beta (1093 aa).

An N-acetylalanine modification is found at Ala2. Ala4 is subject to Phosphoserine. Positions 7–29 are calmodulin-binding; the sequence is LTAEVSWKVLERRARTKRSGSVY. Position 12 is a phosphoserine; by autocatalysis (Ser12). 2 positions are modified to phosphoserine: Ser27 and Ser701. Positions 689-716 are disordered; the sequence is EPPKHSKVKRQSSTPSAPELGQQPDVNI. Calmodulin-binding regions lie at residues 768 to 795 and 920 to 951; these read RVYR…FSSS and NGRC…ILER. The S-farnesyl cysteine moiety is linked to residue Cys1090.

Belongs to the phosphorylase b kinase regulatory chain family. Hexadecamer of 4 heterotetramers, each composed of alpha, beta, gamma, and delta subunits. Alpha (PHKA1 or PHKA2) and beta (PHKB) are regulatory subunits, gamma (PHKG1 or PHKG2) is the catalytic subunit, and delta is calmodulin. Post-translationally, ser-701 is probably phosphorylated by PKA. In terms of processing, although the final Cys may be farnesylated, the terminal tripeptide is probably not removed, and the C-terminus is not methylated.

The protein localises to the cell membrane. The protein operates within glycan biosynthesis; glycogen metabolism. With respect to regulation, by phosphorylation of various serine residues. Functionally, phosphorylase b kinase catalyzes the phosphorylation of serine in certain substrates, including troponin I. The beta chain acts as a regulatory unit and modulates the activity of the holoenzyme in response to phosphorylation. This is Phosphorylase b kinase regulatory subunit beta (PHKB) from Homo sapiens (Human).